Here is a 319-residue protein sequence, read N- to C-terminus: Glutathione synthetase (319 aa).

One can recognise an ATP-grasp domain in the interval 125–311; it reads KLFTAWFPEL…ITGMLMDAIE (187 aa). 151-207 serves as a coordination point for ATP; it reads HQEHGDIILKPLDGMGGTSIFRVKQDDPNLSVIIETLTELSSRFCMAQNFLPAIKEG. Positions 281 and 283 each coordinate Mg(2+).

It belongs to the prokaryotic GSH synthase family. The cofactor is Mg(2+). Mn(2+) is required as a cofactor.

The catalysed reaction is gamma-L-glutamyl-L-cysteine + glycine + ATP = glutathione + ADP + phosphate + H(+). The protein operates within sulfur metabolism; glutathione biosynthesis; glutathione from L-cysteine and L-glutamate: step 2/2. The sequence is that of Glutathione synthetase from Yersinia pestis.